The chain runs to 1194 residues: DNA polymerase catalytic subunit (1194 aa).

This sequence belongs to the DNA polymerase type-B family. Forms a complex with the ssDNA-binding protein, the DNA polymerase processivity factor, and the alkaline exonuclease. Interacts with the helicase-primase complex composed of the primase, the helicase and the primase-associated factor; this interaction may coordinate leading and lagging strand DNA synthesis at the replication fork.

The protein localises to the host nucleus. The enzyme catalyses DNA(n) + a 2'-deoxyribonucleoside 5'-triphosphate = DNA(n+1) + diphosphate. The catalysed reaction is Endonucleolytic cleavage to 5'-phosphomonoester.. Replicates viral genomic DNA. The replication complex is composed of six viral proteins: the DNA polymerase, processivity factor, primase, primase-associated factor, helicase, and ssDNA-binding protein. Additionally, the polymerase contains an intrinsic ribonuclease H (RNase H) activity that specifically degrades RNA/DNA heteroduplexes or duplex DNA substrates in the 5' to 3' direction. Therefore, it can catalyze the excision of the RNA primers that initiate the synthesis of Okazaki fragments at a replication fork during viral DNA replication. In Varicella-zoster virus (strain Dumas) (HHV-3), this protein is DNA polymerase catalytic subunit.